Consider the following 278-residue polypeptide: Small ribosomal subunit protein uS3 (278 aa).

One can recognise a KH type-2 domain in the interval 38 to 106; sequence IRKLLSKGME…QVQLNILEVK (69 aa). A disordered region spans residues 213–278; the sequence is RQAQAAARAG…APAPAENQEG (66 aa). Low complexity predominate over residues 214–223; sequence QAQAAARAGV. The segment covering 232–253 has biased composition (basic and acidic residues); it reads RGGERPSRGSRGDRPTRADRGG. Over residues 259-278 the composition is skewed to low complexity; that stretch reads EATGAATEQAAPAPAENQEG.

Belongs to the universal ribosomal protein uS3 family. In terms of assembly, part of the 30S ribosomal subunit. Forms a tight complex with proteins S10 and S14.

Functionally, binds the lower part of the 30S subunit head. Binds mRNA in the 70S ribosome, positioning it for translation. This chain is Small ribosomal subunit protein uS3, found in Nocardioides sp. (strain ATCC BAA-499 / JS614).